The primary structure comprises 298 residues: Pantothenate synthetase (298 aa).

30–37 (MGNLHEGH) provides a ligand contact to ATP. His37 acts as the Proton donor in catalysis. Position 61 (Gln61) interacts with (R)-pantoate. Residue Gln61 participates in beta-alanine binding. Residue 149–152 (GEKD) coordinates ATP. Gln155 lines the (R)-pantoate pocket. ATP is bound by residues Val178 and 186–189 (MSSR).

It belongs to the pantothenate synthetase family. As to quaternary structure, homodimer.

Its subcellular location is the cytoplasm. The catalysed reaction is (R)-pantoate + beta-alanine + ATP = (R)-pantothenate + AMP + diphosphate + H(+). Its pathway is cofactor biosynthesis; (R)-pantothenate biosynthesis; (R)-pantothenate from (R)-pantoate and beta-alanine: step 1/1. Its function is as follows. Catalyzes the condensation of pantoate with beta-alanine in an ATP-dependent reaction via a pantoyl-adenylate intermediate. The polypeptide is Pantothenate synthetase (Aliivibrio salmonicida (strain LFI1238) (Vibrio salmonicida (strain LFI1238))).